The chain runs to 151 residues: Cytochrome c-type biogenesis protein CcmE 1 (151 aa).

The Cytoplasmic segment spans residues 1-8; sequence MNPLRKKR. Residues 9–29 traverse the membrane as a helical; Signal-anchor for type II membrane protein segment; it reads LIIILAILVGVGAAVGLALSA. At 30-151 the chain is on the periplasmic side; sequence LQQNINLFYT…QSAPTPAKEG (122 aa). The heme site is built by His124 and Tyr128. A disordered region spans residues 131–151; the sequence is PEVTKALKDSGQSAPTPAKEG.

This sequence belongs to the CcmE/CycJ family.

Its subcellular location is the cell inner membrane. Its function is as follows. Heme chaperone required for the biogenesis of c-type cytochromes. Transiently binds heme delivered by CcmC and transfers the heme to apo-cytochromes in a process facilitated by CcmF and CcmH. In Pseudomonas fluorescens (strain Pf0-1), this protein is Cytochrome c-type biogenesis protein CcmE 1.